The following is a 111-amino-acid chain: Estrogen receptor (111 aa).

The tract at residues 1-42 (PSGYAVREAGPPAYYRPNSDNRRQGGRERLASTSDKGSMAVE) is disordered. Residues 1–49 (PSGYAVREAGPPAYYRPNSDNRRQGGRERLASTSDKGSMAVESAKETRY) are modulating. A compositionally biased stretch (basic and acidic residues) spans 19-30 (SDNRRQGGRERL). A Phosphoserine modification is found at Ser-32. 2 NR C4-type zinc fingers span residues 50-70 (CAVC…CEGC) and 86-110 (CPAT…LRKC). Residues 50 to 111 (CAVCNDYASG…CQACRLRKCY (62 aa)) constitute a DNA-binding region (nuclear receptor).

Belongs to the nuclear hormone receptor family. NR3 subfamily. As to quaternary structure, binds DNA as a homodimer. Can form a heterodimer with ESR2. Interacts with coactivator NCOA5. Interacts with PELP1, the interaction is enhanced by 17-beta-estradiol; the interaction increases ESR1 transcriptional activity. Interacts with NCOA7; the interaction is ligand-inducible. Interacts with AKAP13, CUEDC2, HEXIM1, KDM5A, MAP1S, SMARD1, and UBE1C. Interacts with MUC1; the interaction is stimulated by 7 beta-estradiol (E2) and enhances ESR1-mediated transcription. Interacts with DNTTIP2, and UIMC1. Interacts with KMT2D/MLL2. Interacts with ATAD2; the interaction is enhanced by estradiol. Interacts with KIF18A and LDB1. Interacts with RLIM (via its C-terminus). Interacts with MACROD1. Interacts with SH2D4A and PLCG. Interacts with SH2D4A; the interaction blocks binding to PLCG and inhibits estrogen-induced cell proliferation. Interacts with DYNLL1. Interacts with CCDC62; the interaction requires estradiol and appears to enhance the transcription of target genes. Interacts with NR2C1; the interaction prevents homodimerization of ESR1 and suppresses its transcriptional activity and cell growth. Interacts with DNAAF4. Interacts with PRMT2. Interacts with RBFOX2. Interacts with EP300; the interaction is estrogen-dependent and enhanced by CITED1. Interacts with CITED1; the interaction is estrogen-dependent. Interacts with FAM120B, FOXL2, PHB2 and SLC30A9. Interacts with coactivators NCOA3 and NCOA6. Interacts with STK3/MST2 only in the presence of SAV1 and vice-versa. Binds to CSNK1D. Interacts with NCOA2; NCOA2 can interact with ESR1 AF-1 and AF-2 domains simultaneously and mediate their transcriptional synergy. Interacts with DDX5. Interacts with NCOA1; the interaction seems to require a self-association of N-terminal and C-terminal regions. Interacts with ZNF366, DDX17, NFKB1, RELA, SP1 and SP3. Interacts with NRIP1. Interacts with GPER1; the interaction occurs in an estrogen-dependent manner. Interacts with CLOCK and the interaction is stimulated by estrogen. Interacts with TRIP4 (ufmylated); estrogen dependent. Interacts with LMTK3; the interaction phosphorylates ESR1 (in vitro) and protects it against proteasomal degradation. Interacts with CCAR2 (via N-terminus) in a ligand-independent manner. Interacts with ZFHX3. Interacts with SFR1 in a ligand-dependent and -independent manner. Interacts with DCAF13, LATS1 and DCAF1; regulates ESR1 ubiquitination and ubiquitin-mediated proteasomal degradation. Interacts (via DNA-binding domain) with POU4F2 (C-terminus); this interaction increases the estrogen receptor ESR1 transcriptional activity in a DNA- and ligand 17-beta-estradiol-independent manner. Interacts with ESRRB isoform 1. Interacts with UBE3A and WBP2. Interacts with GTF2B. Interacts with RBM39. In the absence of hormonal ligand, interacts with TACC1. Interacts with PI3KR1 or PI3KR2 and PTK2/FAK1. Interacts with SRC. Interacts with BAG1; the interaction is promoted in the absence of estradiol (17-beta-estradiol/E2). Interacts with and ubiquitinated by STUB1; the interaction is promoted in the absence of estradiol (17-beta-estradiol/E2). Interacts with NEDD8. Post-translationally, ubiquitinated; regulated by LATS1 via DCAF1 it leads to ESR1 proteasomal degradation. Deubiquitinated by OTUB1. Ubiquitinated by STUB1/CHIP; in the CA1 hippocampal region following loss of endogenous circulating estradiol (17-beta-estradiol/E2). Ubiquitinated by UBR5, leading to its degradation: UBR5 specifically recognizes and binds ligand-bound ESR1 when it is not associated with coactivators (NCOAs). In presence of NCOAs, the UBR5-degron is not accessible, preventing its ubiquitination and degradation. In terms of processing, dimethylated by PRMT1. Demethylated by JMJD6. Palmitoylated by ZDHHC7 and ZDHHC21. This modification is required for plasma membrane targeting and for rapid intracellular signaling via ERK and AKT kinases and cAMP generation, but not for signaling mediated by the nuclear hormone receptor. Post-translationally, phosphorylated by cyclin A/CDK2 and CK1. Phosphorylation probably enhances transcriptional activity. Dephosphorylation by PPP5C inhibits its transactivation activity. Phosphorylated by LMTK3 (in vitro).

Its subcellular location is the nucleus. The protein localises to the cytoplasm. It localises to the golgi apparatus. The protein resides in the cell membrane. Nuclear hormone receptor. The steroid hormones and their receptors are involved in the regulation of eukaryotic gene expression and affect cellular proliferation and differentiation in target tissues. Ligand-dependent nuclear transactivation involves either direct homodimer binding to a palindromic estrogen response element (ERE) sequence or association with other DNA-binding transcription factors, such as AP-1/c-Jun, c-Fos, ATF-2, Sp1 and Sp3, to mediate ERE-independent signaling. Ligand binding induces a conformational change allowing subsequent or combinatorial association with multiprotein coactivator complexes through LXXLL motifs of their respective components. Mutual transrepression occurs between the estrogen receptor (ER) and NF-kappa-B in a cell-type specific manner. Decreases NF-kappa-B DNA-binding activity and inhibits NF-kappa-B-mediated transcription from the IL6 promoter and displace RELA/p65 and associated coregulators from the promoter. Recruited to the NF-kappa-B response element of the CCL2 and IL8 promoters and can displace CREBBP. Present with NF-kappa-B components RELA/p65 and NFKB1/p50 on ERE sequences. Can also act synergistically with NF-kappa-B to activate transcription involving respective recruitment adjacent response elements; the function involves CREBBP. Can activate the transcriptional activity of TFF1. Also mediates membrane-initiated estrogen signaling involving various kinase cascades. Essential for MTA1-mediated transcriptional regulation of BRCA1 and BCAS3. Maintains neuronal survival in response to ischemic reperfusion injury when in the presence of circulating estradiol (17-beta-estradiol/E2). The sequence is that of Estrogen receptor (ESR1) from Ovis aries (Sheep).